The following is a 130-amino-acid chain: Small ribosomal subunit protein eS8 (130 aa).

It belongs to the eukaryotic ribosomal protein eS8 family. In terms of assembly, part of the 30S ribosomal subunit.

This Ignicoccus hospitalis (strain KIN4/I / DSM 18386 / JCM 14125) protein is Small ribosomal subunit protein eS8.